A 142-amino-acid polypeptide reads, in one-letter code: Transcription antitermination protein NusB (142 aa).

Belongs to the NusB family.

Involved in transcription antitermination. Required for transcription of ribosomal RNA (rRNA) genes. Binds specifically to the boxA antiterminator sequence of the ribosomal RNA (rrn) operons. The chain is Transcription antitermination protein NusB from Thermotoga petrophila (strain ATCC BAA-488 / DSM 13995 / JCM 10881 / RKU-1).